The primary structure comprises 516 residues: Amino-acid permease BAT1 (516 aa).

A run of 12 helical transmembrane segments spans residues L33–T53, Y70–C90, P113–S133, V164–I184, F189–I209, L232–I252, G275–S295, F328–C348, V383–L403, I406–I426, V452–V472, and Y483–A503.

Belongs to the amino acid-polyamine-organocation (APC) superfamily. Amino acid/choline transporter (ACT) (TC 2.A.3.4) family. Expressed in roots, rosette leaves, stems, cauline leaves, flowers and siliques.

It is found in the mitochondrion membrane. Its function is as follows. May play a role in primary carbon metabolism and plant growth, by mediating the transport of GABA from the cytosol to mitochondria. When expressed in a heterologous system (yeast), imports Arg and Ala across the plasma membrane and exports Lys and Glu, but does not transport proline. The sequence is that of Amino-acid permease BAT1 (BAT1) from Arabidopsis thaliana (Mouse-ear cress).